The chain runs to 215 residues: GTP-binding nuclear protein ran-1 (215 aa).

Residues 6–170 (GIPTFKLVLV…LWLARKLLGD (165 aa)) form the Small GTPase Ran-type domain. Residue 17 to 24 (DGGTGKTT) coordinates GTP. A switch-I region spans residues 36-44 (KKYVATLGV). Residues G67, 121 to 124 (NKVD), and 149 to 151 (SAK) contribute to the GTP site. The segment at 67–83 (GQEKFGGLRDGYYIQGQ) is switch-II.

The protein belongs to the small GTPase superfamily. Ran family. Found in a nuclear export complex with RanGTP, exportin and pre-miRNA.

The protein localises to the nucleus. It is found in the chromosome. The protein resides in the centromere. It localises to the kinetochore. Ran GTPase system comprises ran-1, ran-2 and ran-3 and is essential in nucleocytoplasmic transport. Ran-1 is a GTP-binding protein that mediates the interaction between mitotic chromosomes and kinetochore microtubules. Plays a crucial role in nuclear envelope assembly at the end of each cell division. Required for the import of protein into the nucleus and also for RNA export. RCC1 (ran-3)/Ran (ran-1) complex (together with other proteins) acts as a component of a signal transmission pathway that detects unreplicated DNA. The sequence is that of GTP-binding nuclear protein ran-1 (ran-1) from Caenorhabditis elegans.